Reading from the N-terminus, the 92-residue chain is Small ribosomal subunit protein uS19c (92 aa).

It belongs to the universal ribosomal protein uS19 family.

It localises to the plastid. Its subcellular location is the chloroplast. In terms of biological role, protein S19 forms a complex with S13 that binds strongly to the 16S ribosomal RNA. This is Small ribosomal subunit protein uS19c from Panax ginseng (Korean ginseng).